A 297-amino-acid polypeptide reads, in one-letter code: MSTSNSSIPASMPRWRQYWVLTKPRVTQLAVFCAVIGMFLATPGMVPYPVLFGGIAGIWLLAGAAFAVNCLIEQAVDAKMKRTSWRPSATGEVTPFHIIIFSIILGSLGMIILWNFCNPLTMWLTLATFVGYAVIYTWLLKPATPQNIVIGGLSGAMPPALGWAAVTNGLSAEAWLLVLIIFVWTPPHFWALALYRRDDYVQSGLPMLPVTHGERFTLLNILLYTLILIAATLLPYIYGMSGIIYLISAIVLGLMFLAYVIALFVSYSDALAKKTFRFSITYLSLLFAALLIDHYFL.

Transmembrane regions (helical) follow at residues 26–46, 48–68, 96–116, 120–140, 147–167, 174–194, 218–238, 243–263, and 276–296; these read VTQL…PGMV, YPVL…AFAV, FHII…LWNF, LTMW…TWLL, NIVI…AAVT, AWLL…ALAL, LLNI…PYIY, IIYL…VIAL, and FRFS…DHYF.

This sequence belongs to the UbiA prenyltransferase family. Protoheme IX farnesyltransferase subfamily.

The protein resides in the cell membrane. It catalyses the reaction heme b + (2E,6E)-farnesyl diphosphate + H2O = Fe(II)-heme o + diphosphate. The protein operates within porphyrin-containing compound metabolism; heme O biosynthesis; heme O from protoheme: step 1/1. Its function is as follows. Converts heme B (protoheme IX) to heme O by substitution of the vinyl group on carbon 2 of heme B porphyrin ring with a hydroxyethyl farnesyl side group. This Polynucleobacter asymbioticus (strain DSM 18221 / CIP 109841 / QLW-P1DMWA-1) (Polynucleobacter necessarius subsp. asymbioticus) protein is Protoheme IX farnesyltransferase.